Reading from the N-terminus, the 188-residue chain is Achaete-scute homolog 5 (188 aa).

Residues 80–93 (AFIQKRNERERQRV) form a basic motif region. A bHLH domain is found at 80 to 132 (AFIQKRNERERQRVKCVNEGYARLRGHLPGALTEKRLSKVETLRAAIRYIKYL). Residues 94 to 132 (KCVNEGYARLRGHLPGALTEKRLSKVETLRAAIRYIKYL) are helix-loop-helix motif. A disordered region spans residues 139 to 188 (TPDGAPPPATSPPPAHTGHSNVPQPSSLVAESSGSPFSSSPFLESEEPSL). The span at 142 to 153 (GAPPPATSPPPA) shows a compositional bias: pro residues. Polar residues predominate over residues 158-168 (SNVPQPSSLVA). Residues 169-181 (ESSGSPFSSSPFL) show a composition bias toward low complexity.

Interacts with transcription factor TCF3/E12. As to expression, expressed in teeth (at protein level).

The protein resides in the nucleus. In terms of biological role, transcription factor. Probably binds E-box motifs 5'-CANNTG-3' in complex with transcription factor TCF3/E12. Negatively modulates transcription of target genes such as CDH1/E-cadherin, perhaps by recruiting the PRC2 repressive complex to regulatory elements. Regulates ameloblast development and tooth germ growth, perhaps acting by positively modulating migration of inner enamel epithelium (IEE) cells. Plays a role in enamel formation. In Mus musculus (Mouse), this protein is Achaete-scute homolog 5.